A 418-amino-acid chain; its full sequence is UDP-N-acetylglucosamine 1-carboxyvinyltransferase (418 aa).

Residue 22 to 23 (KN) participates in phosphoenolpyruvate binding. Arg-92 serves as a coordination point for UDP-N-acetyl-alpha-D-glucosamine. Residue Cys-116 is the Proton donor of the active site. The residue at position 116 (Cys-116) is a 2-(S-cysteinyl)pyruvic acid O-phosphothioketal. 2 residues coordinate UDP-N-acetyl-alpha-D-glucosamine: Asp-305 and Ile-327.

This sequence belongs to the EPSP synthase family. MurA subfamily.

Its subcellular location is the cytoplasm. The catalysed reaction is phosphoenolpyruvate + UDP-N-acetyl-alpha-D-glucosamine = UDP-N-acetyl-3-O-(1-carboxyvinyl)-alpha-D-glucosamine + phosphate. It functions in the pathway cell wall biogenesis; peptidoglycan biosynthesis. In terms of biological role, cell wall formation. Adds enolpyruvyl to UDP-N-acetylglucosamine. This is UDP-N-acetylglucosamine 1-carboxyvinyltransferase from Gluconobacter oxydans (strain 621H) (Gluconobacter suboxydans).